The chain runs to 786 residues: Endonuclease MutS2 (786 aa).

332–339 (GPNTGGKT) lines the ATP pocket. The Smr domain maps to 711–786 (IDLRGMDSEE…GTGVTVVILK (76 aa)).

It belongs to the DNA mismatch repair MutS family. MutS2 subfamily. In terms of assembly, homodimer. Binds to stalled ribosomes, contacting rRNA.

In terms of biological role, endonuclease that is involved in the suppression of homologous recombination and thus may have a key role in the control of bacterial genetic diversity. Acts as a ribosome collision sensor, splitting the ribosome into its 2 subunits. Detects stalled/collided 70S ribosomes which it binds and splits by an ATP-hydrolysis driven conformational change. Acts upstream of the ribosome quality control system (RQC), a ribosome-associated complex that mediates the extraction of incompletely synthesized nascent chains from stalled ribosomes and their subsequent degradation. Probably generates substrates for RQC. The chain is Endonuclease MutS2 from Clostridium perfringens (strain ATCC 13124 / DSM 756 / JCM 1290 / NCIMB 6125 / NCTC 8237 / Type A).